Reading from the N-terminus, the 250-residue chain is GPI-anchored hemophore PGA10 (250 aa).

The signal sequence occupies residues Met-1 to Ala-20. The region spanning Asn-26–Ala-137 is the CFEM domain. 4 disulfides stabilise this stretch: Cys-54-Cys-94, Cys-58-Cys-89, Cys-68-Cys-75, and Cys-77-Cys-110. Asp-72 lines the heme pocket. The segment at Ser-165 to Ala-219 is disordered. Low complexity predominate over residues Ala-178–Thr-192. A compositionally biased stretch (basic and acidic residues) spans Ser-193–Glu-209. The span at Thr-210–Ala-219 shows a compositional bias: low complexity. The GPI-anchor amidated asparagine moiety is linked to residue Asn-230. Residues Ala-231–Ile-250 constitute a propeptide, removed in mature form.

The protein belongs to the RBT5 family. Post-translationally, the GPI-anchor is attached to the protein in the endoplasmic reticulum and serves to target the protein to the cell surface. There, the glucosamine-inositol phospholipid moiety is cleaved off and the GPI-modified mannoprotein is covalently attached via its lipidless GPI glycan remnant to the 1,6-beta-glucan of the outer cell wall layer. In terms of processing, mannosylated.

The protein localises to the secreted. It localises to the cell wall. The protein resides in the cell membrane. Heme-binding protein involved in heme-iron utilization. The ability to acquire iron from host tissues is a major virulence factor of pathogenic microorganisms. Involved in biofilm formation. This is GPI-anchored hemophore PGA10 from Candida albicans (strain SC5314 / ATCC MYA-2876) (Yeast).